A 390-amino-acid polypeptide reads, in one-letter code: Enoyl-[acyl-carrier-protein] reductase [NADH], chloroplastic (390 aa).

Residues 1–74 (MAATAASSLQ…CKRPFSFSTR (74 aa)) constitute a chloroplast transit peptide. Residues Leu-53 and Asn-170 each coordinate NADP(+). Catalysis depends on Ser-239, which acts as the Proton donor. 2 residues coordinate NADP(+): Lys-282 and Ser-314. Lys-282 functions as the Lowers pKa of active site Tyr in the catalytic mechanism.

This sequence belongs to the short-chain dehydrogenases/reductases (SDR) family. FabI subfamily. In terms of assembly, homotetramer. Expressed in flowers and siliques and at lower levels in roots and leaves (at protein level).

The protein localises to the plastid. The protein resides in the chloroplast. It catalyses the reaction a 2,3-saturated acyl-[ACP] + NAD(+) = a (2E)-enoyl-[ACP] + NADH + H(+). It participates in lipid metabolism; fatty acid biosynthesis. Inhibited by the phytotoxin cyperin and the synthetic antimicrobial compound triclosan. Its function is as follows. Catalyzes the NAD-dependent reduction of a carbon-carbon double bond in an enoyl moiety that is covalently linked to an acyl carrier protein (ACP). Catalyzes the last reduction step in the de novo synthesis cycle of fatty acids. Involved in the elongation cycle of fatty acids which are used in lipid metabolism. Required for normal plant growth. The protein is Enoyl-[acyl-carrier-protein] reductase [NADH], chloroplastic (MOD1) of Arabidopsis thaliana (Mouse-ear cress).